Reading from the N-terminus, the 129-residue chain is Large ribosomal subunit protein bL12c (129 aa).

A compositionally biased stretch (basic and acidic residues) spans 101-123 (KPIKEGMSKADAEAGKKQLEEAG). Residues 101-129 (KPIKEGMSKADAEAGKKQLEEAGAKATLK) are disordered.

Belongs to the bacterial ribosomal protein bL12 family. In terms of assembly, homodimer. Part of the ribosomal stalk of the 50S ribosomal subunit. Forms a multimeric L10(L12)X complex, where L10 forms an elongated spine to which 2 to 4 L12 dimers bind in a sequential fashion. Binds GTP-bound translation factors.

Its subcellular location is the plastid. The protein localises to the chloroplast. Forms part of the ribosomal stalk which helps the ribosome interact with GTP-bound translation factors. Is thus essential for accurate translation. This Guillardia theta (Cryptophyte) protein is Large ribosomal subunit protein bL12c.